Consider the following 1233-residue polypeptide: MGTKWTEEQKQAITTRGSNLLVAAAAGSGKTAVLVERIINLITDEENPVDIDRLLVVTFTNAAASEMRERIAEALIAILDQNPEDKRLANQLTLLNKATITTIHSFCLEVVRNNFFLLDLDPNFRIGDDTETLLLQLEASEELFEEMYAKEDKDKEGFLTLVESYGGTKDDQDLQDILLRLYGFVRSLPWPEKWLKDVINTFRVEDNFKFETSKWAEVILDSLKVEISGILNTMLVAVDKLKNEAGLEGYFHAFQREAYEIEQLLQYDNWNEFKNHIQAIEFERLPNAGKDANKNVKEEVSNIRKKVKDKIKEIKEKFFSDSVEEIKDEIKALYPIMEALADLILLFDKKYKEKKREKGIIDFNDIEHFALQILTEIDEEGAVNPSEVALHYREKFEEIFVDEYQDSNLIQEEILSIIARENPPNRFMVGDVKQSIYRFRQANPYIFFEKYNSYSLDTGEKNQKILLYKNFRSRIEVIEAINYIFKKIMSKNIGEVNYTEEEKLNYGAEYEIPPEDSVTGGAVELHLIEKQKVEEEVEEKEEEKNEEKDFEEEEEDLIDDIQVEARVVAERIKQLFSQNFMVYDKNIKSYRVVDYRDIVVLLRATDRWAPVFLEELTQAGIPAFADTGTGYFDTTEIKTIISLLQVIDNPMQDIPLLAVLRSPIFSFTEEELIDLRLEDMEKTIYEAIKKASQREDELGEKAKNFLDTLKKWQEKAVYMPVDEFLWYLYKDTGYYSYVAAMPQGVQRQANLRILFERAKQYEETSFKGLFNFINFINRLKVSSGDMGSAKIVGENENVVRIMSIHKSKGLEFPVVIVAGLGKQFNTKDLYQKILYHHFLGLGPEFVDFRRRISYPSIVKEAIKYKIKLEGLSEEMRVLYVALTRAKEKLILVGSARDIKKNVRKWANAAILQEKVSEYDILNGKSYMDWIGAAVIRHKDLEPLREFAGVSLSEEEDASKWEVKLWNKKDVLLEKEKNDKVDVVERLRSLDLDAHYSEFYKEVERRLNYVYPYEKACYLPAKLSVTEVKRILNAEVVDEDTTSIFEREVLKTPIFLEKKKGLTAAEKGIAMHLVMQKLDLDKDLSLEGIKEQIKDMVDREILTEEQAKEVNIHKIEGFFKTSLGERMLSSKNVKREVPFHIKLSSREIYKDLPEEYENEFIQVQGIIDCFFEEEDGLVLIDYKTDYVQEGKVEEIKERYKVQIELYSKALENITGKKVKEKYIYLFFNGNILEY.

The 472-residue stretch at 3-474 folds into the UvrD-like helicase ATP-binding domain; sequence TKWTEEQKQA…ILLYKNFRSR (472 aa). Position 24-31 (24-31) interacts with ATP; sequence AAAGSGKT. A UvrD-like helicase C-terminal domain is found at 518–809; sequence VTGGAVELHL…RIMSIHKSKG (292 aa). Residues 533-555 form a disordered region; it reads VEEEVEEKEEEKNEEKDFEEEEE.

This sequence belongs to the helicase family. AddA subfamily. In terms of assembly, heterodimer of AddA and AddB/RexB. Mg(2+) serves as cofactor.

The enzyme catalyses Couples ATP hydrolysis with the unwinding of duplex DNA by translocating in the 3'-5' direction.. The catalysed reaction is ATP + H2O = ADP + phosphate + H(+). Its function is as follows. The heterodimer acts as both an ATP-dependent DNA helicase and an ATP-dependent, dual-direction single-stranded exonuclease. Recognizes the chi site generating a DNA molecule suitable for the initiation of homologous recombination. The AddA nuclease domain is required for chi fragment generation; this subunit has the helicase and 3' -&gt; 5' nuclease activities. The chain is ATP-dependent helicase/nuclease subunit A from Thermoanaerobacter pseudethanolicus (strain ATCC 33223 / 39E) (Clostridium thermohydrosulfuricum).